Reading from the N-terminus, the 238-residue chain is Purine nucleoside phosphorylase DeoD-type (238 aa).

H4 provides a ligand contact to a purine D-ribonucleoside. Phosphate-binding positions include G20, R24, R43, and 87–90 (RVGS). A purine D-ribonucleoside-binding positions include 179 to 181 (EME) and 203 to 204 (SD). The active-site Proton donor is D204.

Belongs to the PNP/UDP phosphorylase family. Homohexamer; trimer of homodimers.

It carries out the reaction a purine D-ribonucleoside + phosphate = a purine nucleobase + alpha-D-ribose 1-phosphate. The enzyme catalyses a purine 2'-deoxy-D-ribonucleoside + phosphate = a purine nucleobase + 2-deoxy-alpha-D-ribose 1-phosphate. Its function is as follows. Catalyzes the reversible phosphorolytic breakdown of the N-glycosidic bond in the beta-(deoxy)ribonucleoside molecules, with the formation of the corresponding free purine bases and pentose-1-phosphate. The sequence is that of Purine nucleoside phosphorylase DeoD-type from Actinobacillus succinogenes (strain ATCC 55618 / DSM 22257 / CCUG 43843 / 130Z).